Consider the following 217-residue polypeptide: Ras-related protein Rab-39A (217 aa).

6 residues coordinate GTP: Ser-17, Gly-20, Lys-21, Ser-22, Cys-23, and Thr-44. Ser-22 provides a ligand contact to Mg(2+). A switch-I region spans residues 39–47; it reads PACDPTVGV. Residues Thr-44 and Asp-68 each coordinate Mg(2+). 6 residues coordinate GTP: Gly-71, His-127, Lys-128, Asp-130, Ala-158, and Lys-159. The segment at 71–87 is switch-II; it reads GQERFRSITRSYYRNSV. 2 S-geranylgeranyl cysteine lipidation sites follow: Cys-215 and Cys-217. Cysteine methyl ester is present on Cys-217.

Belongs to the small GTPase superfamily. Rab family. As to quaternary structure, interacts (GDP-bound) with C9orf72; C9orf72 acts as a GEF for RAB39A. Interacts (GTP-bound) with HOPS complex components VPS39 and VPS41, and STX17; interaction between HOPS components and RAB39A contributes to obtaining a functional HOPS complex that promotes membrane fusion driven by STX17-SNAP29-VAMP8. Interacts with BECN1. Probably associates with the PI3K (PI3KC3/PI3K-III/class III phosphatidylinositol 3-kinase) complex. Interacts with UACA. Interacts with isoform a of RASSF1. Does not interact with isoform c of RASSF1. The cofactor is Mg(2+). Prenylated. Prenylation is required for association with cellular membranes.

The protein localises to the cell membrane. It localises to the cytoplasmic vesicle. The protein resides in the phagosome membrane. It is found in the late endosome membrane. Its subcellular location is the lysosome membrane. The protein localises to the autolysosome membrane. It carries out the reaction GTP + H2O = GDP + phosphate + H(+). Regulated by guanine nucleotide exchange factors (GEFs) including c9Orf72, which promote the exchange of bound GDP for free GTP. Regulated by GTPase activating proteins (GAPs) which increase the GTP hydrolysis activity. Inhibited by GDP dissociation inhibitors (GDIs). The small GTPases Rab are key regulators of intracellular membrane trafficking, from the formation of transport vesicles to their fusion with membranes. Rabs cycle between an inactive GDP-bound form and an active GTP-bound form that is able to recruit to membranes different sets of downstream effectors directly responsible for vesicle formation, movement, tethering and fusion. RAB39A regulates autophagosome-lysosome fusion via recruitment of the HOPS endosomal tethering complex onto lysosomes; this process involves lysosomal RAB39A and autophagosomal RAB2A recruitment of HOPS subcomplexes VPS41-VPS16-VPS18-VPS33A and VPS39-VPS11, respectively, which assemble into a functional complex to mediate membrane tethering and SNAREs-driven membrane fusion. Also negatively regulates lipopolysaccharide (LPS)-induced autophagosome formation in macrophages, possibly by implicating PI3K. Promotes the delivery of MHC-I molecules from the ER to phagosomes and the generation of peptide-loaded MHC-I complexes in phagosomes, thus enhancing antigen cross-presentation by dendritic cells. Plays a role in the maturation and acidification of phagosomes that engulf pathogens, such as S.aureus and M.tuberculosis. Plays a role in the fusion of phagosomes with lysosomes. May be involved in multiple neurite formation. In Mus musculus (Mouse), this protein is Ras-related protein Rab-39A.